Consider the following 193-residue polypeptide: dCTP deaminase (193 aa).

Residues R110–R115, D128, V136–E138, Y171, K178, and Q182 each bind dCTP. The active-site Proton donor/acceptor is E138. The tract at residues D168–D193 is disordered. Residues P170–Y179 show a composition bias toward basic and acidic residues.

Belongs to the dCTP deaminase family. As to quaternary structure, homotrimer.

It carries out the reaction dCTP + H2O + H(+) = dUTP + NH4(+). Its pathway is pyrimidine metabolism; dUMP biosynthesis; dUMP from dCTP (dUTP route): step 1/2. Catalyzes the deamination of dCTP to dUTP. The chain is dCTP deaminase from Photorhabdus laumondii subsp. laumondii (strain DSM 15139 / CIP 105565 / TT01) (Photorhabdus luminescens subsp. laumondii).